The sequence spans 160 residues: Negative modulator of initiation of replication (160 aa).

Belongs to the SeqA family. In terms of assembly, homodimer. Polymerizes to form helical filaments.

Its subcellular location is the cytoplasm. In terms of biological role, negative regulator of replication initiation, which contributes to regulation of DNA replication and ensures that replication initiation occurs exactly once per chromosome per cell cycle. Binds to pairs of hemimethylated GATC sequences in the oriC region, thus preventing assembly of replication proteins and re-initiation at newly replicated origins. Repression is relieved when the region becomes fully methylated. This chain is Negative modulator of initiation of replication, found in Idiomarina loihiensis (strain ATCC BAA-735 / DSM 15497 / L2-TR).